Reading from the N-terminus, the 107-residue chain is Small polypeptide DEVIL 9 (107 aa).

Positions 1–12 (MDEKWRLSKKDA) are enriched in basic and acidic residues. Residues 1 to 79 (MDEKWRLSKK…EKGSITQKYS (79 aa)) are disordered. The helical transmembrane segment at 9 to 29 (KKDALAASCSSSSTSSKSKFS) threads the bilayer. The segment covering 13–65 (LAASCSSSSTSSKSKFSRSFSTSASSSKAPAFVRSSSTKCSVPSSSSSSISRS) has biased composition (low complexity). Residues 73-104 (SITQKYSSLAKEQKGRFYIMRRCVAMLVCWHK) form a required for DVL/RTFL small polypeptide activity region.

It belongs to the DVL/RTFL small polypeptides family.

The protein localises to the cell membrane. Small polypeptide acting as a regulatory molecule which coordinates cellular responses required for differentiation, growth and development, probably by restricting polar cell proliferation in lateral organs and coordinating socket cell recruitment and differentiation at trichome sites. This chain is Small polypeptide DEVIL 9, found in Arabidopsis thaliana (Mouse-ear cress).